We begin with the raw amino-acid sequence, 406 residues long: E3 ubiquitin-protein ligase RING1 (406 aa).

A Phosphothreonine modification is found at Thr-24. Residues 30–234 (MDGTEIAVSP…GGAGSEDSGD (205 aa)) are necessary for transcriptional repression. Ser-38 is subject to Phosphoserine. Residues 48 to 88 (CPICLDMLKNTMTTKECLHRFCSDCIVTALRSGNKECPTCR) form an RING-type zinc finger. Phosphoserine is present on residues Ser-140, Ser-187, and Ser-190. 2 disordered regions span residues 151–263 (HRAQ…GEIE) and 309–354 (QQQE…PSLE). Acidic residues predominate over residues 175–187 (EPGEGEGDGEDVS). Positions 201–204 (KRPR) match the Nuclear localization signal motif. Residues 214–228 (GTGGGAAGGACGGAG) show a composition bias toward gly residues. At Thr-215 the chain carries Phosphothreonine. 2 positions are modified to phosphoserine: Ser-229 and Ser-232. The segment at 230–406 (EDSGDRGGTL…LCYAPTKDPK (177 aa)) is necessary for interaction with CBX2. Residues 235–244 (RGGTLGGGTL) are compositionally biased toward gly residues. Residues 246 to 258 (PPSPPGAPSPPEP) are compositionally biased toward pro residues. A phosphoserine mark is found at Ser-248 and Ser-254. Residues 317-343 (GGPGGGASDTGGPDGGGGERGVAGGGE) are compositionally biased toward gly residues.

As to quaternary structure, component of chromatin-associated Polycomb (PcG) complexes. Part of the E2F6.com-1 complex in G0 phase composed of E2F6, MGA, MAX, TFDP1, CBX3, BAT8, EUHMTASE1, RING1, RNF2/RING2 MBLR, L3MBTL2 and YAF2. Interacts with CBX2 and PCGF6. Component of a PRC1-like complex. Component of repressive BCOR complex containing Polycomb group subcomplex at least composed of RYBP, PCGF1, BCOR and RNF2/RING2. Interacts with PHC2, PCGF2, RNF2; CBX6, CBX7 and CBX8. Interacts with BMI1. Interacts with MN1. Interacts with USP26.

It is found in the nucleus speckle. It catalyses the reaction S-ubiquitinyl-[E2 ubiquitin-conjugating enzyme]-L-cysteine + [acceptor protein]-L-lysine = [E2 ubiquitin-conjugating enzyme]-L-cysteine + N(6)-ubiquitinyl-[acceptor protein]-L-lysine.. It functions in the pathway protein modification; protein ubiquitination. Constitutes one of the E3 ubiquitin-protein ligases that mediate monoubiquitination of 'Lys-119' of histone H2A, thereby playing a central role in histone code and gene regulation. H2A 'Lys-119' ubiquitination gives a specific tag for epigenetic transcriptional repression and participates in X chromosome inactivation of female mammals. Essential component of a Polycomb group (PcG) multiprotein PRC1-like complex, a complex class required to maintain the transcriptionally repressive state of many genes, including Hox genes, throughout development. PcG PRC1 complex acts via chromatin remodeling and modification of histones, rendering chromatin heritably changed in its expressibility. Compared to RNF2/RING2, it does not have the main E3 ubiquitin ligase activity on histone H2A, and it may rather act as a modulator of RNF2/RING2 activity. In Mus musculus (Mouse), this protein is E3 ubiquitin-protein ligase RING1.